The primary structure comprises 122 residues: Large ribosomal subunit protein uL14 (122 aa).

It belongs to the universal ribosomal protein uL14 family. As to quaternary structure, part of the 50S ribosomal subunit. Forms a cluster with proteins L3 and L19. In the 70S ribosome, L14 and L19 interact and together make contacts with the 16S rRNA in bridges B5 and B8.

In terms of biological role, binds to 23S rRNA. Forms part of two intersubunit bridges in the 70S ribosome. This Acidothermus cellulolyticus (strain ATCC 43068 / DSM 8971 / 11B) protein is Large ribosomal subunit protein uL14.